The following is a 56-amino-acid chain: Endoregulin (56 aa).

The helical transmembrane segment at 25-45 (LTVIGLFTSTFLLFVLFAVVF) threads the bilayer.

As to quaternary structure, homooligomer. Can also form heterooligomers with other sarcoplasmic/endoplasmic reticulum calcium ATPase (SERCA) regulators ARLN, PLN, SLN and STRIT1/DWORF. Monomer. Interacts as a monomer with ATP2A2/SERCA2; the interaction results in inhibition of ATP2A2 Ca(2+) affinity. Largely expressed in non-muscle tissues with the exception of weak expression in body wall muscles at 14.5 dpc. Expressed in epithelial cells of the trachea, bronchus, lung, intestine, pancreas, and liver.

The protein localises to the endoplasmic reticulum membrane. In terms of biological role, inhibits the activity of the calcium ATPases ATP2A2/SERCA2 and ATP2A3/SERCA3 by decreasing their apparent affinity for Ca(2+). This is Endoregulin (Erln) from Mus musculus (Mouse).